The primary structure comprises 242 residues: Uridylate kinase (242 aa).

11–14 (KLSG) is a binding site for ATP. An involved in allosteric activation by GTP region spans residues 19-24 (GDKGVG). A UMP-binding site is contributed by Gly53. Positions 54 and 58 each coordinate ATP. Residues Asp73 and 134–141 (IGSPYFST) contribute to the UMP site. The ATP site is built by Asn162, Tyr168, and Asp171.

It belongs to the UMP kinase family. In terms of assembly, homohexamer.

Its subcellular location is the cytoplasm. It carries out the reaction UMP + ATP = UDP + ADP. The protein operates within pyrimidine metabolism; CTP biosynthesis via de novo pathway; UDP from UMP (UMPK route): step 1/1. With respect to regulation, allosterically activated by GTP. Inhibited by UTP. Catalyzes the reversible phosphorylation of UMP to UDP. The polypeptide is Uridylate kinase (Streptococcus agalactiae serotype III (strain NEM316)).